Here is a 134-residue protein sequence, read N- to C-terminus: Complexin-1 (134 aa).

2 disordered regions span residues 1–60 and 74–114; these read MEFV…AERE and KKEE…EEDE. The segment covering 15-60 has biased composition (basic and acidic residues); sequence DMGKMLGGDEEKDPDAAKKEEERQEALRQAEEERKAKYAKMEAERE. Residues 29-64 adopt a coiled-coil conformation; the sequence is DAAKKEEERQEALRQAEEERKAKYAKMEAEREVMRQ. An interaction with the SNARE complex region spans residues 48–70; sequence RKAKYAKMEAEREVMRQGIRDKY.

Belongs to the complexin/synaphin family. In terms of assembly, binds to the SNARE core complex containing SNAP25, VAMP2 and STX1A. Nervous system, and pancreatic islet cells. Present in many brain regions, including hippocampus and cerebellum. In the retina, present at conventional amacrine cell synapses (at protein level).

The protein resides in the cytoplasm. Its subcellular location is the cytosol. It localises to the perikaryon. The protein localises to the presynapse. Positively regulates a late step in exocytosis of various cytoplasmic vesicles, such as synaptic vesicles and other secretory vesicles. Organizes the SNAREs into a cross-linked zigzag topology that, when interposed between the vesicle and plasma membranes, is incompatible with fusion, thereby preventing SNAREs from releasing neurotransmitters until an action potential arrives at the synapse. Also involved in glucose-induced secretion of insulin by pancreatic beta-cells. Essential for motor behavior. In Mus musculus (Mouse), this protein is Complexin-1 (Cplx1).